An 856-amino-acid polypeptide reads, in one-letter code: Inactive rhomboid protein 2 (856 aa).

The tract at residues 1–115 is disordered; the sequence is MASADKNGGS…PGFRRQASLS (115 aa). At 1 to 409 the chain is on the cytoplasmic side; the sequence is MASADKNGGS…HRPYFTYWLT (409 aa). Phosphoserine is present on Ser-90. The segment covering 94-106 has biased composition (basic and acidic residues); it reads PRSRWQESSEKRP. Phosphoserine is present on residues Ser-113 and Ser-117. The segment at 165–184 is disordered; that stretch reads PSQEAPSFQGTESPKPCKMP. Positions 191 to 271 are involved in interaction with FRMD8; sequence ARGRAFRHPE…GQRCRVVKRS (81 aa). Residues Ser-323, Ser-325, and Ser-328 each carry the phosphoserine modification. A helical transmembrane segment spans residues 410-430; the sequence is FVHVIITLLVICTYGIAPVGF. Residues 431–660 are Lumenal-facing; that stretch reads AQHVTTQLVL…PDQFYRLWLS (230 aa). The interval 531–553 is disordered; the sequence is GPPMDKSDLGQKRTSGAVCHQDP. A helical membrane pass occupies residues 661–681; sequence LFLHAGVVHCLVSVVFQMTIL. Residues 682 to 692 are Cytoplasmic-facing; sequence RDLEKLAGWHR. A helical membrane pass occupies residues 693–713; that stretch reads IAIIFILSGITGNLASAIFLP. The Lumenal segment spans residues 714–715; it reads YR. Residues 716-736 form a helical membrane-spanning segment; the sequence is AEVGPAGSQFGLLACLFVELF. Residues 737–747 are Cytoplasmic-facing; the sequence is QSWPLLERPWK. Residues 748–768 form a helical membrane-spanning segment; it reads AFLNLSAIVLFLFICGLLPWI. The Lumenal portion of the chain corresponds to 769–773; it reads DNIAH. The helical transmembrane segment at 774–794 threads the bilayer; it reads IFGFLSGLLLAFAFLPYITFG. The Cytoplasmic portion of the chain corresponds to 795–802; it reads TSDKYRKR. Residues 803–823 traverse the membrane as a helical segment; that stretch reads ALILVSLLAFAGLFAALVLWL. The Lumenal segment spans residues 824-856; that stretch reads YIYPINWPWIEHLTCFPFTSRFCEKYELDQVLH.

This sequence belongs to the peptidase S54 family. As to quaternary structure, interacts with EGF. Interacts (via cytoplasmic N-terminus) with FRMD8/iTAP; this interaction leads to mutual protein stabilization. Interacts with ADAM17/TACE. Found in the epidermis and esophageal epithelium.

The protein localises to the endoplasmic reticulum membrane. The protein resides in the cell membrane. Functionally, regulates ADAM17 protease, a sheddase of the epidermal growth factor (EGF) receptor ligands and TNF, thereby plays a role in sleep, cell survival, proliferation, migration and inflammation. Does not exhibit any protease activity on its own. This Homo sapiens (Human) protein is Inactive rhomboid protein 2 (RHBDF2).